The sequence spans 205 residues: Adenylate kinase (205 aa).

10-15 (GAGKGT) is an ATP binding site. The segment at 30 to 59 (STGDMLRAAVAQGSEVGKVAEGIMARGELV) is NMP. AMP contacts are provided by residues T31, R36, 57–59 (ELV), 85–88 (GFPR), and Q92. The interval 126–139 (TRAAETAGGPRADD) is LID. ATP is bound at residue R127. AMP is bound by residues R136 and R147. K175 is an ATP binding site.

This sequence belongs to the adenylate kinase family. Monomer.

Its subcellular location is the cytoplasm. It catalyses the reaction AMP + ATP = 2 ADP. It participates in purine metabolism; AMP biosynthesis via salvage pathway; AMP from ADP: step 1/1. Its function is as follows. Catalyzes the reversible transfer of the terminal phosphate group between ATP and AMP. Plays an important role in cellular energy homeostasis and in adenine nucleotide metabolism. This is Adenylate kinase from Parvibaculum lavamentivorans (strain DS-1 / DSM 13023 / NCIMB 13966).